Consider the following 883-residue polypeptide: MNEQYSALRSNVSMLGKVLGETIKDALGEHILDRVETIRKLSKSSRAGNEANRQELLTTLQNLSNDELLPVARAFSQFLNLANTAEQYHSISPKGEAASNPEVIARTLRKLKNQPDLNDATIKKAVESLSLELVLTAHPTEITRRTLIHKMGEINNCLKQLDNTDIADYERHQVMRRLRQLIAQSWHTDEIRKQRPSPVDEAKWGFAVVENSLWQGVPNYLRELNEQLEENLGYKLPVDFVPVRFTSWMGGDRDGNPNVTADITRHVLLLSRWKATDLFLKDIHVLVSELSMVDATPELLALVGEEGASEPYRYLMKKLRARLMATQSWLEARLKGEKLPKPAGLLTQNEQLWEPLYACYQSLQACGMGIIANGELLDTLRRVKCFGVPLVRIDIRQESTRHTEALGEITRYLGIGDYESWSEADKQALLIRELNSKRPLLPRNWEPSNDTREVLETCKVIAEAPKGSIAAYVISMAKTPSDVLAVHLLLKEAGIGFAMPVAPLFETLDDLNNADDVMTQLLNIDWYRGLIQGKQMVMIGYSDSAKDAGVMAASWAQYQAQDALIKTCEKAGIELTLFHGRGGSIGRGGAPAHAALLSQPPGSLKGGLRVTEQGEMIRFKYGLPEVTVSSLSLYTSAILEANLLPPPEPKDSWRHIMDELSVISCETYRGYVRENKDFVPYFRSATPEQELGKLPLGSRPAKRRPTGGVESLRAIPWIFAWTQNRLMLPAWLGAGTALQKVVEDGKQSELEAMCRDWPFFSTRLGMLEMVFSKADLWLADYYDQRLVAKTLWPLGKELRDLLEEDIKVVLAIANDSHLMADLPWIAESIQLRNVYTDPLNVLQAELLYRSRLTEEQGKSPDPRVEQALMVTIAGVAAGMRNTG.

Catalysis depends on residues His138 and Lys546.

The protein belongs to the PEPCase type 1 family. The cofactor is Mg(2+).

The enzyme catalyses oxaloacetate + phosphate = phosphoenolpyruvate + hydrogencarbonate. Its function is as follows. Forms oxaloacetate, a four-carbon dicarboxylic acid source for the tricarboxylic acid cycle. The sequence is that of Phosphoenolpyruvate carboxylase from Salmonella choleraesuis (strain SC-B67).